Here is a 750-residue protein sequence, read N- to C-terminus: Meiosis protein mei2 (750 aa).

Residues 1 to 20 are disordered; that stretch reads MIMETESPLSITSPSPSDST. A compositionally biased stretch (polar residues) spans 7–20; it reads SPLSITSPSPSDST. 2 RRM domains span residues 195–270 and 293–361; these read RYLF…FCQR and LLLN…CLQV.

As to quaternary structure, binds rad24 when phosphorylated. Post-translationally, inactivated by phosphorylation by ran1/pat1.

Functionally, crucial for commitment to meiosis but it is not sufficient itself for the commitment. May be a splicing regulator. In Schizosaccharomyces pombe (strain 972 / ATCC 24843) (Fission yeast), this protein is Meiosis protein mei2 (mei2).